We begin with the raw amino-acid sequence, 178 residues long: Ribosome maturation factor RimM (178 aa).

In terms of domain architecture, PRC barrel spans 101–178 (EGEFYWYQLQ…EMRVDWDADF (78 aa)).

It belongs to the RimM family. As to quaternary structure, binds ribosomal protein uS19.

The protein resides in the cytoplasm. In terms of biological role, an accessory protein needed during the final step in the assembly of 30S ribosomal subunit, possibly for assembly of the head region. Essential for efficient processing of 16S rRNA. May be needed both before and after RbfA during the maturation of 16S rRNA. It has affinity for free ribosomal 30S subunits but not for 70S ribosomes. This is Ribosome maturation factor RimM from Ectopseudomonas mendocina (strain ymp) (Pseudomonas mendocina).